The sequence spans 610 residues: Dihydroxy-acid dehydratase (610 aa).

D81 contacts Mg(2+). C122 contacts [2Fe-2S] cluster. Positions 123 and 124 each coordinate Mg(2+). K124 bears the N6-carboxylysine mark. C193 lines the [2Fe-2S] cluster pocket. E489 lines the Mg(2+) pocket. The Proton acceptor role is filled by S515.

Belongs to the IlvD/Edd family. As to quaternary structure, homodimer. The cofactor is [2Fe-2S] cluster. Mg(2+) is required as a cofactor.

It carries out the reaction (2R)-2,3-dihydroxy-3-methylbutanoate = 3-methyl-2-oxobutanoate + H2O. The enzyme catalyses (2R,3R)-2,3-dihydroxy-3-methylpentanoate = (S)-3-methyl-2-oxopentanoate + H2O. It functions in the pathway amino-acid biosynthesis; L-isoleucine biosynthesis; L-isoleucine from 2-oxobutanoate: step 3/4. It participates in amino-acid biosynthesis; L-valine biosynthesis; L-valine from pyruvate: step 3/4. Its function is as follows. Functions in the biosynthesis of branched-chain amino acids. Catalyzes the dehydration of (2R,3R)-2,3-dihydroxy-3-methylpentanoate (2,3-dihydroxy-3-methylvalerate) into 2-oxo-3-methylpentanoate (2-oxo-3-methylvalerate) and of (2R)-2,3-dihydroxy-3-methylbutanoate (2,3-dihydroxyisovalerate) into 2-oxo-3-methylbutanoate (2-oxoisovalerate), the penultimate precursor to L-isoleucine and L-valine, respectively. In Xylella fastidiosa (strain 9a5c), this protein is Dihydroxy-acid dehydratase.